The chain runs to 204 residues: Cysteine-rich protein 3 (204 aa).

In terms of domain architecture, LIM zinc-binding 1 spans 3–64 (WTCPRCQQPV…KPCYGALFGP (62 aa)). Positions 88 to 107 (ISLSPSNFSPPRPRTGLSRA) are disordered. An LIM zinc-binding 2 domain is found at 122–183 (SLCPGCGDPV…IPCYGYLFGP (62 aa)).

Expressed specifically by the thymus.

The protein localises to the cytoplasm. The protein is Cysteine-rich protein 3 (Crip3) of Mus musculus (Mouse).